The chain runs to 42 residues: Snaclec lebecetin subunit alpha (42 aa).

The C-type lectin domain maps to 1-42 (DQDCLPGWSSHEGHCYKVFNLDKTWEDAEKFCTEQPSNGHLV). A disulfide bridge links cysteine 4 with cysteine 15.

As to quaternary structure, heterodimer of subunits alpha and beta; disulfide-linked. The cofactor is Ca(2+). In terms of processing, glycosylated. As to expression, expressed by the venom gland.

The protein resides in the secreted. Functionally, binds to the platelet GPIb/IX/V receptor system and inhibits ristocetin-induced platelet aggregation in human platelet-rich plasma. Strongly inhibits platelet aggregation induced by ADP, calcium ionophore, thrombin and collagen. Does not inhibit U46619-induced platelet aggregation. In Macrovipera lebetinus (Levantine viper), this protein is Snaclec lebecetin subunit alpha.